The primary structure comprises 438 residues: Xylose isomerase (438 aa).

Catalysis depends on residues His100 and Asp103. 7 residues coordinate Mg(2+): Glu231, Glu267, His270, Asp295, Asp306, Asp308, and Asp338.

It belongs to the xylose isomerase family. In terms of assembly, homotetramer. Mg(2+) serves as cofactor.

It is found in the cytoplasm. The enzyme catalyses alpha-D-xylose = alpha-D-xylulofuranose. The polypeptide is Xylose isomerase (Pseudomonas savastanoi pv. phaseolicola (strain 1448A / Race 6) (Pseudomonas syringae pv. phaseolicola (strain 1448A / Race 6))).